A 234-amino-acid chain; its full sequence is Large ribosomal subunit protein uL1 (234 aa).

The protein belongs to the universal ribosomal protein uL1 family. Part of the 50S ribosomal subunit.

Functionally, binds directly to 23S rRNA. The L1 stalk is quite mobile in the ribosome, and is involved in E site tRNA release. In terms of biological role, protein L1 is also a translational repressor protein, it controls the translation of the L11 operon by binding to its mRNA. The protein is Large ribosomal subunit protein uL1 of Baumannia cicadellinicola subsp. Homalodisca coagulata.